The primary structure comprises 109 residues: Flagellar hook-basal body complex protein FliE (109 aa).

It belongs to the FliE family.

Its subcellular location is the bacterial flagellum basal body. This chain is Flagellar hook-basal body complex protein FliE, found in Pseudomonas paraeruginosa (strain DSM 24068 / PA7) (Pseudomonas aeruginosa (strain PA7)).